A 273-amino-acid chain; its full sequence is Octanoyltransferase LipM (273 aa).

The BPL/LPL catalytic domain occupies 32–240 (GEIPPTLRFY…GFSEILNIEL (209 aa)). C142 acts as the Acyl-thioester intermediate in catalysis.

The protein belongs to the octanoyltransferase LipM family. As to quaternary structure, monomer.

It carries out the reaction octanoyl-[ACP] + L-lysyl-[protein] = N(6)-octanoyl-L-lysyl-[protein] + holo-[ACP] + H(+). It functions in the pathway protein modification; protein lipoylation via endogenous pathway; protein N(6)-(lipoyl)lysine from octanoyl-[acyl-carrier-protein]. In terms of biological role, catalyzes the transfer of endogenously produced octanoic acid from octanoyl-acyl-carrier-protein onto the lipoyl domain of GcvH, an intermediate carrier during protein lipoylation. This Oceanobacillus iheyensis (strain DSM 14371 / CIP 107618 / JCM 11309 / KCTC 3954 / HTE831) protein is Octanoyltransferase LipM.